The sequence spans 350 residues: tRNA uridine(34) hydroxylase (350 aa).

A Rhodanese domain is found at 146–240 (DDPDAVFIDM…YARKAREQGL (95 aa)). The active-site Cysteine persulfide intermediate is the C200. A disordered region spans residues 314-350 (PEEEQRRRRAGRENGNKIFNKSRGRLNTQLGIPDPAE). The span at 316-328 (EEQRRRRAGRENG) shows a compositional bias: basic and acidic residues.

Belongs to the TrhO family.

It carries out the reaction uridine(34) in tRNA + AH2 + O2 = 5-hydroxyuridine(34) in tRNA + A + H2O. Its function is as follows. Catalyzes oxygen-dependent 5-hydroxyuridine (ho5U) modification at position 34 in tRNAs. The sequence is that of tRNA uridine(34) hydroxylase from Citrobacter koseri (strain ATCC BAA-895 / CDC 4225-83 / SGSC4696).